Here is a 178-residue protein sequence, read N- to C-terminus: Large ribosomal subunit protein uL6 (178 aa).

It belongs to the universal ribosomal protein uL6 family. Part of the 50S ribosomal subunit.

In terms of biological role, this protein binds to the 23S rRNA, and is important in its secondary structure. It is located near the subunit interface in the base of the L7/L12 stalk, and near the tRNA binding site of the peptidyltransferase center. The sequence is that of Large ribosomal subunit protein uL6 from Gluconobacter oxydans (strain 621H) (Gluconobacter suboxydans).